We begin with the raw amino-acid sequence, 287 residues long: Orotidine 5'-phosphate decarboxylase (287 aa).

The Proton donor role is filled by Lys-95.

It belongs to the OMP decarboxylase family. Type 2 subfamily.

It carries out the reaction orotidine 5'-phosphate + H(+) = UMP + CO2. Its pathway is pyrimidine metabolism; UMP biosynthesis via de novo pathway; UMP from orotate: step 2/2. This Albidiferax ferrireducens (strain ATCC BAA-621 / DSM 15236 / T118) (Rhodoferax ferrireducens) protein is Orotidine 5'-phosphate decarboxylase.